Consider the following 522-residue polypeptide: Protein nucleotidyltransferase YdiU (522 aa).

Residues G101, G103, R104, K123, D135, G136, R193, and R200 each contribute to the ATP site. D270 functions as the Proton acceptor in the catalytic mechanism. 2 residues coordinate Mg(2+): N271 and D280. Residue D280 participates in ATP binding.

Belongs to the SELO family. It depends on Mg(2+) as a cofactor. Mn(2+) serves as cofactor.

The catalysed reaction is L-seryl-[protein] + ATP = 3-O-(5'-adenylyl)-L-seryl-[protein] + diphosphate. It catalyses the reaction L-threonyl-[protein] + ATP = 3-O-(5'-adenylyl)-L-threonyl-[protein] + diphosphate. The enzyme catalyses L-tyrosyl-[protein] + ATP = O-(5'-adenylyl)-L-tyrosyl-[protein] + diphosphate. It carries out the reaction L-histidyl-[protein] + UTP = N(tele)-(5'-uridylyl)-L-histidyl-[protein] + diphosphate. The catalysed reaction is L-seryl-[protein] + UTP = O-(5'-uridylyl)-L-seryl-[protein] + diphosphate. It catalyses the reaction L-tyrosyl-[protein] + UTP = O-(5'-uridylyl)-L-tyrosyl-[protein] + diphosphate. Nucleotidyltransferase involved in the post-translational modification of proteins. It can catalyze the addition of adenosine monophosphate (AMP) or uridine monophosphate (UMP) to a protein, resulting in modifications known as AMPylation and UMPylation. The chain is Protein nucleotidyltransferase YdiU from Flavobacterium johnsoniae (strain ATCC 17061 / DSM 2064 / JCM 8514 / BCRC 14874 / CCUG 350202 / NBRC 14942 / NCIMB 11054 / UW101) (Cytophaga johnsonae).